The chain runs to 129 residues: MTTESLETLVEKLSNLTVLELSQLKKLLEEKWDVTASAPVVAVAAGGGGEAPVAAEPTEFAVTLEDVPADKKIGVLKVVREVTGLALKEAKEMTEGLPKTVKEKTSKSDAEDTVKKLQDAGAKASFKGL.

The segment at 94–113 (TEGLPKTVKEKTSKSDAEDT) is disordered.

It belongs to the bacterial ribosomal protein bL12 family. Homodimer. Part of the ribosomal stalk of the 50S ribosomal subunit. Forms a multimeric L10(L12)X complex, where L10 forms an elongated spine to which 2 to 4 L12 dimers bind in a sequential fashion. Binds GTP-bound translation factors.

Functionally, forms part of the ribosomal stalk which helps the ribosome interact with GTP-bound translation factors. Is thus essential for accurate translation. The chain is Large ribosomal subunit protein bL12 from Chlamydia pneumoniae (Chlamydophila pneumoniae).